A 40-amino-acid chain; its full sequence is Large ribosomal subunit protein bL36 (40 aa).

This sequence belongs to the bacterial ribosomal protein bL36 family.

The protein is Large ribosomal subunit protein bL36 of Corynebacterium kroppenstedtii (strain DSM 44385 / JCM 11950 / CIP 105744 / CCUG 35717).